Consider the following 255-residue polypeptide: Microfibril-associated glycoprotein 4 (255 aa).

A signal peptide spans 1–21; that stretch reads MKALLALPLLLLLSTPPCAPQ. The short motif at 26–28 is the Cell attachment site element; it reads RGD. Residues 32–255 form the Fibrinogen C-terminal domain; that stretch reads RFCLQQPLDC…KRTEMKIRRA (224 aa). N-linked (GlcNAc...) asparagine glycosylation is found at Asn-87 and Asn-137.

As to quaternary structure, homodimer. Can also form higher oligomers. Interacts with FBN1, FBN2 and LOX. Interacts with COL1A1 in a Ca (2+)-dependent manner. Interacts with ELN in a Ca (2+)-dependent manner; this interaction promotes ELN self-assembly.

It localises to the secreted. Its subcellular location is the extracellular space. The protein localises to the extracellular matrix. Its function is as follows. Could be involved in calcium-dependent cell adhesion or intercellular interactions. May contribute to the elastic fiber assembly and/or maintenance. The polypeptide is Microfibril-associated glycoprotein 4 (MFAP4) (Homo sapiens (Human)).